A 739-amino-acid polypeptide reads, in one-letter code: Phosphoribosylformylglycinamidine synthase subunit PurL (739 aa).

The active site involves histidine 54. Residues tyrosine 57 and lysine 96 each contribute to the ATP site. Glutamate 98 contributes to the Mg(2+) binding site. Substrate is bound by residues 99–102 and arginine 121; that span reads SHNH. Histidine 100 functions as the Proton acceptor in the catalytic mechanism. A Mg(2+)-binding site is contributed by aspartate 122. Glutamine 245 is a substrate binding site. Aspartate 273 lines the Mg(2+) pocket. Position 317–319 (317–319) interacts with substrate; the sequence is ESQ. 2 residues coordinate ATP: aspartate 500 and glycine 537. Mg(2+) is bound at residue asparagine 538. Residue serine 540 participates in substrate binding.

This sequence belongs to the FGAMS family. As to quaternary structure, monomer. Part of the FGAM synthase complex composed of 1 PurL, 1 PurQ and 2 PurS subunits.

The protein resides in the cytoplasm. It catalyses the reaction N(2)-formyl-N(1)-(5-phospho-beta-D-ribosyl)glycinamide + L-glutamine + ATP + H2O = 2-formamido-N(1)-(5-O-phospho-beta-D-ribosyl)acetamidine + L-glutamate + ADP + phosphate + H(+). It functions in the pathway purine metabolism; IMP biosynthesis via de novo pathway; 5-amino-1-(5-phospho-D-ribosyl)imidazole from N(2)-formyl-N(1)-(5-phospho-D-ribosyl)glycinamide: step 1/2. Its function is as follows. Part of the phosphoribosylformylglycinamidine synthase complex involved in the purines biosynthetic pathway. Catalyzes the ATP-dependent conversion of formylglycinamide ribonucleotide (FGAR) and glutamine to yield formylglycinamidine ribonucleotide (FGAM) and glutamate. The FGAM synthase complex is composed of three subunits. PurQ produces an ammonia molecule by converting glutamine to glutamate. PurL transfers the ammonia molecule to FGAR to form FGAM in an ATP-dependent manner. PurS interacts with PurQ and PurL and is thought to assist in the transfer of the ammonia molecule from PurQ to PurL. The sequence is that of Phosphoribosylformylglycinamidine synthase subunit PurL from Bacillus cereus (strain Q1).